Reading from the N-terminus, the 690-residue chain is Elongation factor G (690 aa).

Residues 8–283 (EDYRNFGIMA…AVVDYLPSPV (276 aa)) enclose the tr-type G domain. GTP-binding positions include 17–24 (AHIDAGKT), 81–85 (DTPGH), and 135–138 (NKMD).

It belongs to the TRAFAC class translation factor GTPase superfamily. Classic translation factor GTPase family. EF-G/EF-2 subfamily.

It localises to the cytoplasm. In terms of biological role, catalyzes the GTP-dependent ribosomal translocation step during translation elongation. During this step, the ribosome changes from the pre-translocational (PRE) to the post-translocational (POST) state as the newly formed A-site-bound peptidyl-tRNA and P-site-bound deacylated tRNA move to the P and E sites, respectively. Catalyzes the coordinated movement of the two tRNA molecules, the mRNA and conformational changes in the ribosome. This chain is Elongation factor G, found in Rhodopseudomonas palustris (strain HaA2).